We begin with the raw amino-acid sequence, 353 residues long: UPF0283 membrane protein YcjF (353 aa).

3 helical membrane-spanning segments follow: residues 70–90, 100–120, and 213–233; these read MVMG…VQWT, VALG…GSVV, and ESTL…FIAW.

The protein belongs to the UPF0283 family.

It is found in the cell inner membrane. This chain is UPF0283 membrane protein YcjF, found in Escherichia coli O139:H28 (strain E24377A / ETEC).